We begin with the raw amino-acid sequence, 1086 residues long: DNA polymerase delta catalytic subunit (1086 aa).

The interval 1–64 (MTDRSSNEGV…KTSSFEDELA (64 aa)) is disordered. Residues 29-58 (EITDVKRRRLSERNGYGDKKGSSSKEKTSS) show a composition bias toward basic and acidic residues. The Zn(2+) site is built by C993, C996, C1008, and C1011. The segment at 993 to 1011 (CLGCKAPIKKGKTALCENC) adopts a CysA-type zinc-finger fold. 4 residues coordinate [4Fe-4S] cluster: C1040, C1043, C1053, and C1058. The CysB motif motif lies at 1040–1058 (CQRCQGSMHQDVICTSRDC).

It belongs to the DNA polymerase type-B family. As to quaternary structure, heterotetramer that consist of the pol3, cdc1, cdc27 and cdm1 subunits. The pol3 subunit contains the polymerase active site and most likely the active site for the 3'-5' exonuclease activity. It depends on [4Fe-4S] cluster as a cofactor.

The protein resides in the nucleus. It catalyses the reaction DNA(n) + a 2'-deoxyribonucleoside 5'-triphosphate = DNA(n+1) + diphosphate. Its function is as follows. Catalytic component of DNA polymerase delta (DNA polymerase III) which participates in chromosomal DNA replication. Required during synthesis of the lagging DNA strands at the replication fork, binds at/or near replication origins and moves along DNA with the replication fork. Participates in leading strand synthesis during replication initiation and termination. Has 3'-5' proofreading exonuclease activity that corrects errors arising during DNA replication. The chain is DNA polymerase delta catalytic subunit (pol3) from Schizosaccharomyces pombe (strain 972 / ATCC 24843) (Fission yeast).